Consider the following 1217-residue polypeptide: Genetic suppressor element 1 (1217 aa).

Positions Met-1–Arg-155 are disordered. Ser-10 is subject to Phosphoserine. The span at Met-15–Pro-33 shows a compositional bias: polar residues. Composition is skewed to low complexity over residues Ser-43–Ala-63 and Gly-76–Pro-89. Phosphoserine occurs at positions 84 and 95. A compositionally biased stretch (low complexity) spans Val-103–Gly-114. An Asymmetric dimethylarginine modification is found at Arg-305. A coiled-coil region spans residues Glu-321–Ala-403. Disordered stretches follow at residues Ser-324–Leu-385 and Arg-418–Val-465. The segment covering Leu-331–Leu-385 has biased composition (basic and acidic residues). The residue at position 433 (Thr-433) is a Phosphothreonine. A compositionally biased stretch (low complexity) spans Pro-450–Val-465. Lys-496 is modified (N6-acetyllysine). 3 disordered regions span residues His-526–Ala-579, Lys-633–Leu-675, and Phe-699–Pro-720. Basic and acidic residues-rich tracts occupy residues Asn-551–Pro-561 and Lys-633–Pro-645. Residues Pro-711 to Pro-720 are compositionally biased toward pro residues. Lys-739 carries the post-translational modification N6-acetyllysine. Ser-766 carries the phosphoserine modification. Disordered stretches follow at residues Lys-807 to Pro-858, Ala-903 to Val-930, Glu-948 to Gly-981, and Leu-1068 to Lys-1122. Over residues Gln-813–Leu-822 the composition is skewed to basic residues. Phosphoserine is present on residues Ser-826 and Ser-828. Polar residues-rich tracts occupy residues Thr-831–Ser-840 and Thr-847–Pro-858. A Phosphoserine modification is found at Ser-857. Position 907 is a phosphothreonine (Thr-907). Ser-909 is subject to Phosphoserine. Polar residues predominate over residues Leu-1068–Pro-1085. A compositionally biased stretch (acidic residues) spans Arg-1099 to Glu-1117. Ser-1101 is modified (phosphoserine). Residues Glu-1127 to Ala-1201 are a coiled coil.

In terms of assembly, may be a component of a BHC histone deacetylase complex that contains HDAC1, HDAC2, HMG20B/BRAF35, KDM1A, RCOR1/CoREST, PHF21A/BHC80, ZMYM2, ZNF217, ZMYM3, GSE1 and GTF2I.

This is Genetic suppressor element 1 (GSE1) from Homo sapiens (Human).